A 762-amino-acid chain; its full sequence is Coleoptile phototropism protein 1 (762 aa).

Residues 1-12 (MWESESESHGGE) show a composition bias toward basic and acidic residues. The interval 1-29 (MWESESESHGGERGLVPVGGGGGSGRHEA) is disordered. Residues 51-128 (SDLLVKVGDV…SYGMAVDLTA (78 aa)) form the BTB domain. Residues 227 to 238 (PAAIRGGGGSGG) show a composition bias toward gly residues. Disordered regions lie at residues 227–264 (PAAIRGGGGSGGTASPRWNVGGGGGGESKESSPSRQAV), 460–495 (MAVASSPGRGDPPPPPQPEYYSGRMPPSSAAAASAS), 687–718 (QVDGRGGGAPSPAAAKIGKQQQQGTSASAWSS), and 731–762 (GADAAAGGGVAPPGGGEAAARKGPRRWRNSIS). In terms of domain architecture, NPH3 spans 268–607 (DWWFEDVSVL…VQVLFTEQVK (340 aa)). Positions 654–691 (AAAKKDINTLKFELESMKAKYLELQHEMDALQKQVDGR) form a coiled coil. Residues 696-709 (PSPAAAKIGKQQQQ) show a composition bias toward low complexity. The span at 736–747 (AGGGVAPPGGGE) shows a compositional bias: gly residues. Positions 752–762 (KGPRRWRNSIS) are enriched in basic residues.

This sequence belongs to the NPH3 family.

It participates in protein modification; protein ubiquitination. Its function is as follows. May act as a substrate-specific adapter of an E3 ubiquitin-protein ligase complex (CUL3-RBX1-BTB) which mediates the ubiquitination and subsequent proteasomal degradation of target proteins. Plays a role as signal transduction component in coleoptile phototropism and lateral translocation of auxin. This is Coleoptile phototropism protein 1 (CPT1) from Oryza sativa subsp. japonica (Rice).